The primary structure comprises 169 residues: Large ribosomal subunit protein uL15 (169 aa).

Residues 1–13 (MKLNEIRDNEGAT) are compositionally biased toward basic and acidic residues. A disordered region spans residues 1–40 (MKLNEIRDNEGATKNRMRVGRGIGSGKGKTGGRGVKGQKA). Residues 21 to 35 (RGIGSGKGKTGGRGV) are compositionally biased toward gly residues.

The protein belongs to the universal ribosomal protein uL15 family. Part of the 50S ribosomal subunit.

Binds to the 23S rRNA. The sequence is that of Large ribosomal subunit protein uL15 from Methylorubrum populi (strain ATCC BAA-705 / NCIMB 13946 / BJ001) (Methylobacterium populi).